Reading from the N-terminus, the 88-residue chain is UPF0223 protein RBAM_014500 (88 aa).

This sequence belongs to the UPF0223 family.

This is UPF0223 protein RBAM_014500 from Bacillus velezensis (strain DSM 23117 / BGSC 10A6 / LMG 26770 / FZB42) (Bacillus amyloliquefaciens subsp. plantarum).